The chain runs to 423 residues: Autophagy-related protein 18 (423 aa).

WD repeat units follow at residues 1 to 34 (MNYV…KIFT), 183 to 223 (AHRA…KLYQ), 228 to 267 (TYPS…TGMP), and 367 to 407 (SRSG…GGEG). Positions 224–228 (FRRGT) match the L/FRRG motif motif. The segment at 260 to 320 (GGPVTGMPES…KSTGTFGSMI (61 aa)) is disordered.

Belongs to the WD repeat PROPPIN family. Component of the PI(3,5)P2 regulatory complex.

The protein localises to the preautophagosomal structure membrane. It localises to the vacuole membrane. Its subcellular location is the endosome membrane. Its function is as follows. The PI(3,5)P2 regulatory complex regulates both the synthesis and turnover of phosphatidylinositol 3,5-bisphosphate (PtdIns(3,5)P2). Necessary for proper vacuole morphology. Plays an important role in osmotically-induced vacuole fragmentation. Required for cytoplasm to vacuole transport (Cvt) vesicle formation, pexophagy and starvation-induced autophagy. Involved in correct atg9 trafficking to the pre-autophagosomal structure. Might also be involved in premeiotic DNA replication. The polypeptide is Autophagy-related protein 18 (atg18) (Sclerotinia sclerotiorum (strain ATCC 18683 / 1980 / Ss-1) (White mold)).